The following is a 410-amino-acid chain: Peptide chain release factor subunit 1 (410 aa).

This sequence belongs to the eukaryotic release factor 1 family. Heterodimer of two subunits, one of which binds GTP.

It is found in the cytoplasm. Its function is as follows. Directs the termination of nascent peptide synthesis (translation) in response to the termination codons UAA, UAG and UGA. The polypeptide is Peptide chain release factor subunit 1 (Picrophilus torridus (strain ATCC 700027 / DSM 9790 / JCM 10055 / NBRC 100828 / KAW 2/3)).